The following is a 359-amino-acid chain: Fructose-bisphosphate aldolase (359 aa).

S50 is a D-glyceraldehyde 3-phosphate binding site. Catalysis depends on D83, which acts as the Proton donor. 4 residues coordinate Zn(2+): H84, D105, E142, and H198. G199 contacts dihydroxyacetone phosphate. A Zn(2+)-binding site is contributed by H232. Residues 233-235 (GSS) and 275-278 (NIDT) contribute to the dihydroxyacetone phosphate site.

The cofactor is Zn(2+).

The enzyme catalyses beta-D-fructose 1,6-bisphosphate = D-glyceraldehyde 3-phosphate + dihydroxyacetone phosphate. The protein operates within carbohydrate degradation; glycolysis; D-glyceraldehyde 3-phosphate and glycerone phosphate from D-glucose: step 4/4. Functionally, catalyzes the aldol condensation of dihydroxyacetone phosphate (DHAP or glycerone-phosphate) with glyceraldehyde 3-phosphate (G3P) to form fructose 1,6-bisphosphate (FBP) in gluconeogenesis and the reverse reaction in glycolysis. In Nostoc sp. (strain PCC 7120 / SAG 25.82 / UTEX 2576), this protein is Fructose-bisphosphate aldolase.